A 212-amino-acid polypeptide reads, in one-letter code: Glycerol-3-phosphate acyltransferase (212 aa).

Transmembrane regions (helical) follow at residues 3–23 (ILLAALVAYLIGSVSFAVVVS), 51–71 (KAAILTLVGDAFKGWLAVWLA), 78–98 (DVAVAWVAIAVFLGHLYPVFF), 115–135 (AVHPVLGLATALTWLIVAFFF), and 139–159 (SLAALVAAVFAPLFDVFLFGT).

Belongs to the PlsY family. As to quaternary structure, probably interacts with PlsX.

It is found in the cell inner membrane. It carries out the reaction an acyl phosphate + sn-glycerol 3-phosphate = a 1-acyl-sn-glycero-3-phosphate + phosphate. The protein operates within lipid metabolism; phospholipid metabolism. Catalyzes the transfer of an acyl group from acyl-phosphate (acyl-PO(4)) to glycerol-3-phosphate (G3P) to form lysophosphatidic acid (LPA). This enzyme utilizes acyl-phosphate as fatty acyl donor, but not acyl-CoA or acyl-ACP. The chain is Glycerol-3-phosphate acyltransferase from Burkholderia ambifaria (strain MC40-6).